A 746-amino-acid polypeptide reads, in one-letter code: NAD(P)H-quinone oxidoreductase subunit 5, chloroplastic (746 aa).

Helical transmembrane passes span 9 to 29 (YIIL…LLFV), 40 to 60 (WAFV…NLAI), 88 to 108 (LIDP…IMVL), 125 to 145 (FAYM…SNLI), 147 to 167 (IHIF…FWFT), 185 to 205 (GDFG…SLEF), 225 to 245 (FAIL…AQFP), 258 to 278 (TPIS…FLVA), 283 to 303 (LFIV…ITLL), 327 to 347 (LGYI…FHLI), 354 to 374 (ALLF…VGYS), 396 to 416 (TTFL…CFWS), 425 to 445 (WLYS…TAFY), 554 to 574 (LFPL…GIPF), 610 to 630 (IFSV…YGSV), and 726 to 746 (YLFL…YFDF).

It belongs to the complex I subunit 5 family. In terms of assembly, NDH is composed of at least 16 different subunits, 5 of which are encoded in the nucleus.

It is found in the plastid. Its subcellular location is the chloroplast thylakoid membrane. The enzyme catalyses a plastoquinone + NADH + (n+1) H(+)(in) = a plastoquinol + NAD(+) + n H(+)(out). It carries out the reaction a plastoquinone + NADPH + (n+1) H(+)(in) = a plastoquinol + NADP(+) + n H(+)(out). NDH shuttles electrons from NAD(P)H:plastoquinone, via FMN and iron-sulfur (Fe-S) centers, to quinones in the photosynthetic chain and possibly in a chloroplast respiratory chain. The immediate electron acceptor for the enzyme in this species is believed to be plastoquinone. Couples the redox reaction to proton translocation, and thus conserves the redox energy in a proton gradient. The sequence is that of NAD(P)H-quinone oxidoreductase subunit 5, chloroplastic (ndhF) from Dioscorea elephantipes (Elephant's foot yam).